The sequence spans 372 residues: MNPGIDLQGTFIETVQSLGIPAGAAKALWMPLPMLIMLLAATVSVLVVVWLERKISAAAQQRIGPEFIGPLGVLAPLADGLKLVLKEDVVPAKADKLLFTLGPAIVVIPVFLSYLILPFGQNLQITDVGLGIFLWIALSSVVPIGLLMSGYASNNKYSLLGGLRAAAQSISYELPLALSVLAVVMMSNSLSTVDIVNQQAGYGILGWNIWRQPVGFIIFWIAALAECERIPFDLPEAEEELVAGYQTEYSGMKFALFYLGSYVNLTLSALLFAVLYLGGWEFPISLSVISGLIGVPESTPWLQLIFATIGIGMTLLKAYFLIFLAILMRWTVPRVRIDQLLDLGWKFLLPVSLVNLLITAGLKLAFPVAFGG.

8 helical membrane-spanning segments follow: residues P31 to L51, P65 to L85, L97 to L117, V128 to M148, L176 to V196, F254 to Y276, L304 to L324, and F347 to P367.

This sequence belongs to the complex I subunit 1 family. NDH-1 is composed of at least 11 different subunits.

The protein resides in the cellular thylakoid membrane. The enzyme catalyses a plastoquinone + NADH + (n+1) H(+)(in) = a plastoquinol + NAD(+) + n H(+)(out). It catalyses the reaction a plastoquinone + NADPH + (n+1) H(+)(in) = a plastoquinol + NADP(+) + n H(+)(out). Functionally, NDH-1 shuttles electrons from an unknown electron donor, via FMN and iron-sulfur (Fe-S) centers, to quinones in the respiratory and/or the photosynthetic chain. The immediate electron acceptor for the enzyme in this species is believed to be plastoquinone. Couples the redox reaction to proton translocation, and thus conserves the redox energy in a proton gradient. The chain is NAD(P)H-quinone oxidoreductase subunit 1 from Leptolyngbya boryana (Plectonema boryanum).